A 591-amino-acid chain; its full sequence is MMRSHYCGQLNESLEGQEVTLCGWVHRRRDHGGVIFLDIRDREGLAQVVFDPDRAETFAKADRVRSEYVVRITGKVRPRPAGAVNPNMASGAIEVLGYELDVLNQAETPPFPLDEYSDVGEETRLRYRFIDLRRPEMAAKLKLRSSITSSIRRYLDENGFLDVETPILTRATPEGARDYLVPSRTHAGSFFALPQSPQLFKQLLMVAGFDRYYQIAKCFRDEDLRADRQPEFTQIDIETSFLDEADIMGITENMIRKLFKEVLDVEFGELPHMTFEEAMRRYGSDKPDLRIPLELVDVADQLKAVEFKVFSGPANDPKGRVAALRVPGAASMPRSQIDDYTRFVGIYGAKGLAYIKVNERAKGVEGLQSPIVKFIPKENLDVILDRVGAVDGDIVFFGADKAKIVSEALGALRIRLGHDLKLLTCEWAPLWVVDFPMFEENDDGSLSALHHPFTAPKCTPEELAANPAVALSRAYDMVLNGTELGGGSIRIHRKEMQQAVFRILGIDEAEQQEKFGFLLDALKYGAPPHGGLAFGLDRLVMLMTGASSIREVIAFPKTQSAACVMTQAPGAVDAKALRELHIRLREQPKAE.

Residue glutamate 174 participates in L-aspartate binding. The segment at glutamine 198 to lysine 201 is aspartate. Arginine 220 serves as a coordination point for L-aspartate. Residues arginine 220–glutamate 222 and glutamine 229 each bind ATP. Histidine 450 contributes to the L-aspartate binding site. Glutamate 483 provides a ligand contact to ATP. Arginine 490 serves as a coordination point for L-aspartate. ATP is bound at residue glycine 535–arginine 538.

Belongs to the class-II aminoacyl-tRNA synthetase family. Type 1 subfamily. In terms of assembly, homodimer.

It localises to the cytoplasm. It catalyses the reaction tRNA(Asx) + L-aspartate + ATP = L-aspartyl-tRNA(Asx) + AMP + diphosphate. In terms of biological role, aspartyl-tRNA synthetase with relaxed tRNA specificity since it is able to aspartylate not only its cognate tRNA(Asp) but also tRNA(Asn). Reaction proceeds in two steps: L-aspartate is first activated by ATP to form Asp-AMP and then transferred to the acceptor end of tRNA(Asp/Asn). The polypeptide is Aspartate--tRNA(Asp/Asn) ligase (Azotobacter vinelandii (strain DJ / ATCC BAA-1303)).